The following is a 121-amino-acid chain: Secretin (121 aa).

The signal sequence occupies residues 1-18 (MAPRPLLLLLLLLGGSAA). Positions 19-26 (RPAPPRAR) are excised as a propeptide. A Valine amide modification is found at Val54. Phosphoserine is present on Ser58. Positions 58–121 (SEQDAENSMA…AAAEGTLRPR (64 aa)) are excised as a propeptide.

The protein belongs to the glucagon family.

It is found in the secreted. In terms of biological role, hormone involved in different processes, such as regulation of the pH of the duodenal content, food intake and water homeostasis. Exerts its biological effects by binding to secretin receptor (SCTR), a G-protein coupled receptor expressed in the basolateral domain of several cells. Acts as a key gastrointestinal hormone by regulating the pH of the duodenal content. Secreted by S cells of the duodenum in the crypts of Lieberkuehn and regulates the pH of the duodenum by (1) inhibiting the secretion of gastric acid from the parietal cells of the stomach and (2) stimulating the production of bicarbonate (NaHCO(3)) from the ductal cells of the pancreas. Production of bicarbonate is essential to neutralize the pH and ensure no damage is done to the small intestine by the gastric acid. In addition to regulating the pH of the duodenal content, plays a central role in diet induced thermogenesis: acts as a non-sympathetic brown fat (BAT) activator mediating prandial thermogenesis, which consequentially induces satiation. Mechanistically, secretin released by the gut after a meal binds to secretin receptor (SCTR) in brown adipocytes, activating brown fat thermogenesis by stimulating lipolysis, which is sensed in the brain and promotes satiation. Also able to stimulate lipolysis in white adipocytes. Also plays an important role in cellular osmoregulation: released into the systemic circulation in response to hyperosmolality and acts at different levels in the hypothalamus, pituitary and kidney to regulate water homeostasis. Also plays a role in the central nervous system, possibly by acting as a neuropeptide hormone: required for hippocampal synaptic function and neural progenitor cells maintenance. This Homo sapiens (Human) protein is Secretin.